The following is a 383-amino-acid chain: Chaperone protein DnaJ (383 aa).

One can recognise a J domain in the interval 5 to 70 (DYYKTLGVTQ…KKRTAYDQYG (66 aa)). The CR-type zinc-finger motif lies at 137–215 (GTIKEIKIPT…CHGNGRIEIS (79 aa)). Zn(2+) is bound by residues cysteine 150, cysteine 153, cysteine 167, cysteine 170, cysteine 189, cysteine 192, cysteine 203, and cysteine 206. CXXCXGXG motif repeat units lie at residues 150–157 (CPTCYGYG), 167–174 (CPTCRGNG), 189–196 (CPQCHGEG), and 203–210 (CRRCHGNG).

The protein belongs to the DnaJ family. In terms of assembly, homodimer. Requires Zn(2+) as cofactor.

The protein resides in the cytoplasm. In terms of biological role, participates actively in the response to hyperosmotic and heat shock by preventing the aggregation of stress-denatured proteins and by disaggregating proteins, also in an autonomous, DnaK-independent fashion. Unfolded proteins bind initially to DnaJ; upon interaction with the DnaJ-bound protein, DnaK hydrolyzes its bound ATP, resulting in the formation of a stable complex. GrpE releases ADP from DnaK; ATP binding to DnaK triggers the release of the substrate protein, thus completing the reaction cycle. Several rounds of ATP-dependent interactions between DnaJ, DnaK and GrpE are required for fully efficient folding. Also involved, together with DnaK and GrpE, in the DNA replication of plasmids through activation of initiation proteins. In Buchnera aphidicola subsp. Baizongia pistaciae (strain Bp), this protein is Chaperone protein DnaJ.